A 369-amino-acid polypeptide reads, in one-letter code: Glutamate 5-kinase (369 aa).

Lys-9 serves as a coordination point for ATP. 3 residues coordinate substrate: Ser-49, Asp-136, and Asn-148. Residues 168-169 and 210-216 contribute to the ATP site; these read TD and TGGMLTK. Residues 275 to 355 enclose the PUA domain; that stretch reads QGSIWVDKGA…KGVLIYRDDW (81 aa).

The protein belongs to the glutamate 5-kinase family.

It localises to the cytoplasm. It carries out the reaction L-glutamate + ATP = L-glutamyl 5-phosphate + ADP. It participates in amino-acid biosynthesis; L-proline biosynthesis; L-glutamate 5-semialdehyde from L-glutamate: step 1/2. Functionally, catalyzes the transfer of a phosphate group to glutamate to form L-glutamate 5-phosphate. In Streptococcus pneumoniae (strain ATCC 700669 / Spain 23F-1), this protein is Glutamate 5-kinase.